A 383-amino-acid polypeptide reads, in one-letter code: 8-amino-7-oxononanoate synthase (383 aa).

Substrate is bound at residue Arg23. Residue 110 to 111 participates in pyridoxal 5'-phosphate binding; sequence GF. His135 is a binding site for substrate. Positions 181, 209, and 235 each coordinate pyridoxal 5'-phosphate. An N6-(pyridoxal phosphate)lysine modification is found at Lys238. Thr351 contacts substrate.

The protein belongs to the class-II pyridoxal-phosphate-dependent aminotransferase family. BioF subfamily. As to quaternary structure, homodimer. The cofactor is pyridoxal 5'-phosphate.

The catalysed reaction is 6-carboxyhexanoyl-[ACP] + L-alanine + H(+) = (8S)-8-amino-7-oxononanoate + holo-[ACP] + CO2. The protein operates within cofactor biosynthesis; biotin biosynthesis. Functionally, catalyzes the decarboxylative condensation of pimeloyl-[acyl-carrier protein] and L-alanine to produce 8-amino-7-oxononanoate (AON), [acyl-carrier protein], and carbon dioxide. The polypeptide is 8-amino-7-oxononanoate synthase (Aliivibrio fischeri (strain ATCC 700601 / ES114) (Vibrio fischeri)).